Consider the following 298-residue polypeptide: CCR4-NOT transcription complex subunit 9 (298 aa).

Belongs to the CNOT9 family. In terms of assembly, homodimer. Component of the CCR4-NOT complex.

The protein resides in the nucleus. The protein localises to the cytoplasm. It is found in the P-body. Its function is as follows. Component of the CCR4-NOT complex which is one of the major cellular mRNA deadenylases and is linked to various cellular processes including bulk mRNA degradation, miRNA-mediated repression, translational repression during translational initiation and general transcription regulation. Additional complex functions may be a consequence of its influence on mRNA expression. Involved in down-regulation of MYB- and JUN-dependent transcription. Enhances ligand-dependent transcriptional activity of nuclear hormone receptors. May play a role in cell differentiation. The chain is CCR4-NOT transcription complex subunit 9 from Danio rerio (Zebrafish).